A 161-amino-acid chain; its full sequence is Putative 4-hydroxy-4-methyl-2-oxoglutarate aldolase (161 aa).

Substrate is bound by residues 75–78 and R97; that span reads GDML. D98 provides a ligand contact to a divalent metal cation.

It belongs to the class II aldolase/RraA-like family. Homotrimer. A divalent metal cation is required as a cofactor.

It catalyses the reaction 4-hydroxy-4-methyl-2-oxoglutarate = 2 pyruvate. The catalysed reaction is oxaloacetate + H(+) = pyruvate + CO2. In terms of biological role, catalyzes the aldol cleavage of 4-hydroxy-4-methyl-2-oxoglutarate (HMG) into 2 molecules of pyruvate. Also contains a secondary oxaloacetate (OAA) decarboxylase activity due to the common pyruvate enolate transition state formed following C-C bond cleavage in the retro-aldol and decarboxylation reactions. In Marinomonas sp. (strain MWYL1), this protein is Putative 4-hydroxy-4-methyl-2-oxoglutarate aldolase.